We begin with the raw amino-acid sequence, 540 residues long: Acetyl-coenzyme A carboxylase carboxyl transferase subunit beta, chloroplastic (540 aa).

The disordered stretch occupies residues 229-249 (YSDNGSSSIRTRTSTSSGSSY). Positions 233–248 (GSSSIRTRTSTSSGSS) are enriched in low complexity. In terms of domain architecture, CoA carboxyltransferase N-terminal spans 267–538 (LWVQCENCYA…TFHPLKSNKV (272 aa)). Positions 271, 274, 290, and 293 each coordinate Zn(2+). A C4-type zinc finger spans residues 271–293 (CENCYALNYNKLFRSKMNVCEQC).

Belongs to the AccD/PCCB family. In terms of assembly, acetyl-CoA carboxylase is a heterohexamer composed of biotin carboxyl carrier protein, biotin carboxylase and 2 subunits each of ACCase subunit alpha and ACCase plastid-coded subunit beta (accD). Zn(2+) serves as cofactor.

Its subcellular location is the plastid. It localises to the chloroplast stroma. The enzyme catalyses N(6)-carboxybiotinyl-L-lysyl-[protein] + acetyl-CoA = N(6)-biotinyl-L-lysyl-[protein] + malonyl-CoA. The protein operates within lipid metabolism; malonyl-CoA biosynthesis; malonyl-CoA from acetyl-CoA: step 1/1. Functionally, component of the acetyl coenzyme A carboxylase (ACC) complex. Biotin carboxylase (BC) catalyzes the carboxylation of biotin on its carrier protein (BCCP) and then the CO(2) group is transferred by the transcarboxylase to acetyl-CoA to form malonyl-CoA. This Amborella trichopoda protein is Acetyl-coenzyme A carboxylase carboxyl transferase subunit beta, chloroplastic.